The chain runs to 472 residues: Divinyl ether synthase CYP74 (472 aa).

Cysteine 425 serves as a coordination point for heme.

Belongs to the cytochrome P450 family. Requires heme as cofactor. Expressed mainly in bulbs, and at lower levels in roots.

The enzyme catalyses (13S)-hydroperoxy-(9Z,11E)-octadecadienoate = etheroleate + H2O. The catalysed reaction is (13S)-hydroperoxy-(9Z,11E,15Z)-octadecatrienoate = etherolenate + H2O. It catalyses the reaction (9S)-hydroperoxy-(10E,12Z)-octadecadienoate = colneleate + H2O. It carries out the reaction (9S)-hydroperoxy-(10E,12Z,15Z)-octadecatrienoate = colnelenate + H2O. It participates in lipid metabolism; oxylipin biosynthesis. Functionally, divinyl ether synthase involved in oxylipin biosynthesis. Catalyzes the conversion of (13S)-hydroperoxy-(9Z,11E)-octadecadienoate (13-HPOD) to etheroleate and (13S)-hydroperoxy-(9Z,11E,15Z)-octadecatrienoate (13-HPOT) to etherolenate. Catalyzes the conversion of (9S)-hydroperoxy-(10E,12Z)-octadecadienoate (9-HPOD) to colneleate and (9S)-hydroperoxy-(10E,12Z,15Z)-octadecatrienoate (9-HPOT) colnelenate. In Allium sativum (Garlic), this protein is Divinyl ether synthase CYP74.